Reading from the N-terminus, the 431-residue chain is Argininosuccinate lyase (431 aa).

It belongs to the lyase 1 family. Argininosuccinate lyase subfamily.

It localises to the cytoplasm. The enzyme catalyses 2-(N(omega)-L-arginino)succinate = fumarate + L-arginine. It functions in the pathway amino-acid biosynthesis; L-arginine biosynthesis; L-arginine from L-ornithine and carbamoyl phosphate: step 3/3. The sequence is that of Argininosuccinate lyase from Xanthomonas campestris pv. campestris (strain B100).